A 540-amino-acid polypeptide reads, in one-letter code: Phosphoenolpyruvate carboxykinase (ATP) (540 aa).

Residue arginine 65 participates in substrate binding. Lysine 87 is subject to N6-acetyllysine. Residues tyrosine 207 and lysine 213 each coordinate substrate. Residues lysine 213, histidine 232, and 248–256 (GLSGTGKTT) contribute to the ATP site. Mn(2+)-binding residues include lysine 213 and histidine 232. Residue aspartate 269 participates in Mn(2+) binding. Residues glutamate 297, arginine 333, 449 to 450 (RI), and threonine 455 each bind ATP. A substrate-binding site is contributed by arginine 333. Lysine 523 carries the post-translational modification N6-acetyllysine.

This sequence belongs to the phosphoenolpyruvate carboxykinase (ATP) family. In terms of assembly, monomer. Mn(2+) is required as a cofactor.

It localises to the cytoplasm. The enzyme catalyses oxaloacetate + ATP = phosphoenolpyruvate + ADP + CO2. The protein operates within carbohydrate biosynthesis; gluconeogenesis. Functionally, involved in the gluconeogenesis. Catalyzes the conversion of oxaloacetate (OAA) to phosphoenolpyruvate (PEP) through direct phosphoryl transfer between the nucleoside triphosphate and OAA. The polypeptide is Phosphoenolpyruvate carboxykinase (ATP) (Escherichia coli O6:K15:H31 (strain 536 / UPEC)).